We begin with the raw amino-acid sequence, 260 residues long: Hydroxyethylthiazole kinase 1 (260 aa).

Residue Met39 participates in substrate binding. Residues Arg115 and Thr160 each contribute to the ATP site. Gly187 contributes to the substrate binding site.

Belongs to the Thz kinase family. Requires Mg(2+) as cofactor.

The catalysed reaction is 5-(2-hydroxyethyl)-4-methylthiazole + ATP = 4-methyl-5-(2-phosphooxyethyl)-thiazole + ADP + H(+). It participates in cofactor biosynthesis; thiamine diphosphate biosynthesis; 4-methyl-5-(2-phosphoethyl)-thiazole from 5-(2-hydroxyethyl)-4-methylthiazole: step 1/1. Its function is as follows. Catalyzes the phosphorylation of the hydroxyl group of 4-methyl-5-beta-hydroxyethylthiazole (THZ). The polypeptide is Hydroxyethylthiazole kinase 1 (Streptococcus pneumoniae (strain Taiwan19F-14)).